Reading from the N-terminus, the 196-residue chain is Transcriptional regulatory protein UhpA (196 aa).

In terms of domain architecture, Response regulatory spans 3 to 116 (TVALIDDHLI…ELIAAVHTVA (114 aa)). D54 is modified (4-aspartylphosphate). The HTH luxR-type domain maps to 131-196 (ASGRQDPLTK…ELARRMFDGW (66 aa)). The H-T-H motif DNA-binding region spans 155-174 (VKEIAAELGLSPKTVHVHRA).

In terms of processing, phosphorylated and dephosphorylated by UhpB.

The protein resides in the cytoplasm. Its activity is regulated as follows. Phosphorylation by UhpB enhances DNA binding activity. Part of the UhpABC signaling cascade that controls the expression of the hexose phosphate transporter UhpT. Activates the transcription of the uhpT gene. Acts by binding specifically to the uhpT promoter region. The protein is Transcriptional regulatory protein UhpA (uhpA) of Escherichia coli (strain K12).